A 123-amino-acid polypeptide reads, in one-letter code: Small ribosomal subunit protein uS12c (123 aa).

Positions 9-31 (RNKRQAAENKTKSPALQRSPQRR) are disordered.

The protein belongs to the universal ribosomal protein uS12 family. As to quaternary structure, part of the 30S ribosomal subunit.

The protein localises to the plastid. It is found in the chloroplast. In terms of biological role, with S4 and S5 plays an important role in translational accuracy. Located at the interface of the 30S and 50S subunits. The sequence is that of Small ribosomal subunit protein uS12c (rps12) from Spirogyra maxima (Green alga).